A 491-amino-acid chain; its full sequence is UDP-N-acetylmuramate--L-alanine ligase (491 aa).

Position 126–132 (126–132 (GTHGKTT)) interacts with ATP.

Belongs to the MurCDEF family.

The protein resides in the cytoplasm. The enzyme catalyses UDP-N-acetyl-alpha-D-muramate + L-alanine + ATP = UDP-N-acetyl-alpha-D-muramoyl-L-alanine + ADP + phosphate + H(+). The protein operates within cell wall biogenesis; peptidoglycan biosynthesis. Cell wall formation. This Shigella sonnei (strain Ss046) protein is UDP-N-acetylmuramate--L-alanine ligase.